Reading from the N-terminus, the 335-residue chain is 3-dehydroquinate synthase (335 aa).

NAD(+) is bound by residues 56–61, 90–94, 114–115, lysine 127, lysine 135, and 153–156; these read DGEKYK, GVITD, TT, and FLKT. Zn(2+)-binding residues include glutamate 168, histidine 227, and histidine 243.

The protein belongs to the sugar phosphate cyclases superfamily. Dehydroquinate synthase family. It depends on NAD(+) as a cofactor. Co(2+) is required as a cofactor. The cofactor is Zn(2+).

It is found in the cytoplasm. The catalysed reaction is 7-phospho-2-dehydro-3-deoxy-D-arabino-heptonate = 3-dehydroquinate + phosphate. Its pathway is metabolic intermediate biosynthesis; chorismate biosynthesis; chorismate from D-erythrose 4-phosphate and phosphoenolpyruvate: step 2/7. Its function is as follows. Catalyzes the conversion of 3-deoxy-D-arabino-heptulosonate 7-phosphate (DAHP) to dehydroquinate (DHQ). The sequence is that of 3-dehydroquinate synthase from Pyrococcus furiosus (strain ATCC 43587 / DSM 3638 / JCM 8422 / Vc1).